The sequence spans 358 residues: tRNA-specific 2-thiouridylase MnmA (358 aa).

ATP is bound by residues 6-13 (AMSGGVDS) and leucine 32. Cysteine 101 (nucleophile) is an active-site residue. Residues cysteine 101 and cysteine 193 are joined by a disulfide bond. Glycine 125 is a binding site for ATP. The tract at residues 143 to 145 (KDQ) is interaction with tRNA. Residue cysteine 193 is the Cysteine persulfide intermediate of the active site.

The protein belongs to the MnmA/TRMU family.

It localises to the cytoplasm. The catalysed reaction is S-sulfanyl-L-cysteinyl-[protein] + uridine(34) in tRNA + AH2 + ATP = 2-thiouridine(34) in tRNA + L-cysteinyl-[protein] + A + AMP + diphosphate + H(+). Functionally, catalyzes the 2-thiolation of uridine at the wobble position (U34) of tRNA, leading to the formation of s(2)U34. The chain is tRNA-specific 2-thiouridylase MnmA from Mycobacterium leprae (strain Br4923).